The chain runs to 644 residues: Threonine--tRNA ligase (644 aa).

In terms of domain architecture, TGS spans 1–61; that stretch reads MNVTIEGQVF…ADTTTIEPVF (61 aa). The segment at 241–532 is catalytic; that stretch reads DHRKLGQQLD…LTEHFAGAFP (292 aa). 3 residues coordinate Zn(2+): C333, H384, and H509.

The protein belongs to the class-II aminoacyl-tRNA synthetase family. As to quaternary structure, homodimer. Zn(2+) is required as a cofactor.

It is found in the cytoplasm. The catalysed reaction is tRNA(Thr) + L-threonine + ATP = L-threonyl-tRNA(Thr) + AMP + diphosphate + H(+). In terms of biological role, catalyzes the attachment of threonine to tRNA(Thr) in a two-step reaction: L-threonine is first activated by ATP to form Thr-AMP and then transferred to the acceptor end of tRNA(Thr). Also edits incorrectly charged L-seryl-tRNA(Thr). The chain is Threonine--tRNA ligase from Nitratidesulfovibrio vulgaris (strain DSM 19637 / Miyazaki F) (Desulfovibrio vulgaris).